The following is a 344-amino-acid chain: Melanocyte-stimulating hormone receptor (344 aa).

Residues 1–37 (MPMQGAQRKLLGSLNSTPTATSNPGLAANHTGAPCLE) are Extracellular-facing. The N-linked (GlcNAc...) asparagine glycan is linked to Asn29. The helical transmembrane segment at 38 to 63 (VSIPDGLFLSLGLVSLVENVLVVAAI) threads the bilayer. The Cytoplasmic portion of the chain corresponds to 64-72 (AKNRNLHSS). A helical membrane pass occupies residues 73–93 (MYYFICCLALSDLLVSGSNML). The Extracellular portion of the chain corresponds to 94–118 (ETAIILLLEAGTLATRASVVQQLHN). The chain crosses the membrane as a helical span at residues 119 to 140 (TIDVLTCSSMLCSLCFLGAIAV). Topologically, residues 141-163 (DRYISIFYALRYHSIMTLPRAQR) are cytoplasmic. The helical transmembrane segment at 164–183 (AIAAIWVASVLSSTLFITYY) threads the bilayer. Over 184–191 (DHAAVLLC) the chain is Extracellular. The helical transmembrane segment at 192-211 (LVVFFLAMLVLMAVLYVHML) threads the bilayer. The Cytoplasmic segment spans residues 212 to 240 (ARACQHAQGIIRLHNRQLPAHKGFGLRGA). A helical transmembrane segment spans residues 241 to 266 (ATLTILLGIFFLCWGPFFLHLTLVVF). Topologically, residues 267–279 (CPQHLTCNCIFKN) are extracellular. Residues 280 to 300 (FKVFLTLIICNTIIDPLIYAF) traverse the membrane as a helical segment. The Cytoplasmic portion of the chain corresponds to 301–344 (RSQELRRTLKEVLLCSSWPGCWAEGGGDSVWPGSCVTLRGPLPP). Residue Cys315 is the site of S-palmitoyl cysteine attachment.

The protein belongs to the G-protein coupled receptor 1 family. As to quaternary structure, interacts with MGRN1, but does not undergo MGRN1-mediated ubiquitination; this interaction competes with GNAS-binding and thus inhibits agonist-induced cAMP production. Interacts with OPN3; the interaction results in a decrease in MC1R-mediated cAMP signaling and ultimately a decrease in melanin production in melanocytes.

It localises to the cell membrane. Functionally, receptor for MSH (alpha, beta and gamma) and ACTH. The activity of this receptor is mediated by G proteins which activate adenylate cyclase. Mediates melanogenesis, the production of eumelanin (black/brown) and phaeomelanin (red/yellow), via regulation of cAMP signaling in melanocytes. The sequence is that of Melanocyte-stimulating hormone receptor (MC1R) from Callithrix jacchus (White-tufted-ear marmoset).